A 70-amino-acid polypeptide reads, in one-letter code: uncharacterized protein (70 aa).

Its subcellular location is the plastid. This is an uncharacterized protein from Euglena longa (Euglenophycean alga).